The chain runs to 70 residues: MLNPSIDSLLTKIDSKYTLVTVAAKRAREMQIADNCVIEKPVSYKCVGKALEEIDLEVLKYVPSDDTIID.

Belongs to the RNA polymerase subunit omega family. The RNAP catalytic core consists of 2 alpha, 1 beta, 1 beta' and 1 omega subunit. When a sigma factor is associated with the core the holoenzyme is formed, which can initiate transcription.

The catalysed reaction is RNA(n) + a ribonucleoside 5'-triphosphate = RNA(n+1) + diphosphate. Promotes RNA polymerase assembly. Latches the N- and C-terminal regions of the beta' subunit thereby facilitating its interaction with the beta and alpha subunits. This is DNA-directed RNA polymerase subunit omega from Bacillus mycoides (strain KBAB4) (Bacillus weihenstephanensis).